A 279-amino-acid polypeptide reads, in one-letter code: UPF0276 protein SO_2008 (279 aa).

Belongs to the UPF0276 family.

This chain is UPF0276 protein SO_2008, found in Shewanella oneidensis (strain ATCC 700550 / JCM 31522 / CIP 106686 / LMG 19005 / NCIMB 14063 / MR-1).